A 263-amino-acid polypeptide reads, in one-letter code: GTP cyclohydrolase 1 type 2 homolog (263 aa).

A divalent metal cation contacts are provided by H65, H66, D104, H225, and E229.

This sequence belongs to the GTP cyclohydrolase I type 2/NIF3 family. In terms of assembly, homohexamer.

This is GTP cyclohydrolase 1 type 2 homolog from Nostoc sp. (strain PCC 7120 / SAG 25.82 / UTEX 2576).